We begin with the raw amino-acid sequence, 315 residues long: Adenine deaminase (315 aa).

Positions 14, 16, and 194 each coordinate Zn(2+). The active-site Proton donor is the Glu197. Residue Asp275 coordinates Zn(2+). A substrate-binding site is contributed by Asp276.

Belongs to the metallo-dependent hydrolases superfamily. Adenosine and AMP deaminases family. Adenine deaminase type 2 subfamily. Zn(2+) serves as cofactor.

It carries out the reaction adenine + H2O + H(+) = hypoxanthine + NH4(+). Its function is as follows. Catalyzes the hydrolytic deamination of adenine to hypoxanthine. Plays an important role in the purine salvage pathway and in nitrogen catabolism. The protein is Adenine deaminase of Pseudomonas putida (strain W619).